We begin with the raw amino-acid sequence, 479 residues long: tRNA modification GTPase MnmE (479 aa).

(6S)-5-formyl-5,6,7,8-tetrahydrofolate contacts are provided by arginine 25, glutamate 82, and lysine 134. One can recognise a TrmE-type G domain in the interval glycine 230–glycine 401. Asparagine 240 contributes to the K(+) binding site. Residues asparagine 240–serine 245, threonine 259–threonine 265, aspartate 284–glycine 287, asparagine 352–aspartate 355, and serine 382–arginine 384 each bind GTP. Position 244 (serine 244) interacts with Mg(2+). Positions 259, 261, and 264 each coordinate K(+). Threonine 265 serves as a coordination point for Mg(2+). (6S)-5-formyl-5,6,7,8-tetrahydrofolate is bound at residue lysine 479.

It belongs to the TRAFAC class TrmE-Era-EngA-EngB-Septin-like GTPase superfamily. TrmE GTPase family. Homodimer. Heterotetramer of two MnmE and two MnmG subunits. K(+) is required as a cofactor.

Its subcellular location is the cytoplasm. In terms of biological role, exhibits a very high intrinsic GTPase hydrolysis rate. Involved in the addition of a carboxymethylaminomethyl (cmnm) group at the wobble position (U34) of certain tRNAs, forming tRNA-cmnm(5)s(2)U34. The sequence is that of tRNA modification GTPase MnmE from Leptothrix cholodnii (strain ATCC 51168 / LMG 8142 / SP-6) (Leptothrix discophora (strain SP-6)).